The following is an 817-amino-acid chain: Anaphase-promoting complex subunit 4 (817 aa).

The residue at position 469 (Y469) is a Phosphotyrosine. S757 and S758 each carry phosphoserine. K772 participates in a covalent cross-link: Glycyl lysine isopeptide (Lys-Gly) (interchain with G-Cter in SUMO2). 2 positions are modified to phosphoserine: S777 and S779. Residue K798 forms a Glycyl lysine isopeptide (Lys-Gly) (interchain with G-Cter in SUMO2) linkage.

The protein belongs to the APC4 family. In terms of assembly, the mammalian APC/C is composed at least of 14 distinct subunits ANAPC1, ANAPC2, CDC27/APC3, ANAPC4, ANAPC5, CDC16/APC6, ANAPC7, CDC23/APC8, ANAPC10, ANAPC11, CDC26/APC12, ANAPC13, ANAPC15 and ANAPC16 that assemble into a complex of at least 19 chains with a combined molecular mass of around 1.2 MDa; APC/C interacts with FZR1 and FBXO5. In the context of the APC/C complex, directly interacts with UBE2S.

It localises to the nucleus. The protein operates within protein modification; protein ubiquitination. In terms of biological role, component of the anaphase promoting complex/cyclosome (APC/C), a cell cycle-regulated E3 ubiquitin ligase that controls progression through mitosis and the G1 phase of the cell cycle. The APC/C complex acts by mediating ubiquitination and subsequent degradation of target proteins: it mainly mediates the formation of 'Lys-11'-linked polyubiquitin chains and, to a lower extent, the formation of 'Lys-48'- and 'Lys-63'-linked polyubiquitin chains. The APC/C complex catalyzes assembly of branched 'Lys-11'-/'Lys-48'-linked branched ubiquitin chains on target proteins. The chain is Anaphase-promoting complex subunit 4 (ANAPC4) from Pongo abelii (Sumatran orangutan).